Consider the following 663-residue polypeptide: Inner nuclear membrane protein HEH2 (663 aa).

Disordered stretches follow at residues Q46–N188 and I267–R289. Residues R47–Q62 are compositionally biased toward polar residues. Residues K91–S123 show a composition bias toward basic and acidic residues. Position 123 is a phosphoserine (S123). The segment covering P124–K134 has biased composition (basic residues). The Nuclear localization signal motif lies at P124–K137. The segment covering E164 to K183 has biased composition (basic and acidic residues). A helical membrane pass occupies residues L317–G337.

As to quaternary structure, interacts with SRP1.

It localises to the nucleus inner membrane. This chain is Inner nuclear membrane protein HEH2 (HEH2), found in Saccharomyces cerevisiae (strain ATCC 204508 / S288c) (Baker's yeast).